The following is a 211-amino-acid chain: Thiamine-phosphate synthase (211 aa).

4-amino-2-methyl-5-(diphosphooxymethyl)pyrimidine contacts are provided by residues 37–41 and asparagine 69; that span reads QLREK. Aspartate 70 and glutamate 89 together coordinate Mg(2+). Serine 108 is a 4-amino-2-methyl-5-(diphosphooxymethyl)pyrimidine binding site. 134 to 136 lines the 2-[(2R,5Z)-2-carboxy-4-methylthiazol-5(2H)-ylidene]ethyl phosphate pocket; sequence TTT. Lysine 137 contacts 4-amino-2-methyl-5-(diphosphooxymethyl)pyrimidine. 2-[(2R,5Z)-2-carboxy-4-methylthiazol-5(2H)-ylidene]ethyl phosphate-binding positions include glycine 163 and 183 to 184; that span reads VS.

This sequence belongs to the thiamine-phosphate synthase family. Requires Mg(2+) as cofactor.

It catalyses the reaction 2-[(2R,5Z)-2-carboxy-4-methylthiazol-5(2H)-ylidene]ethyl phosphate + 4-amino-2-methyl-5-(diphosphooxymethyl)pyrimidine + 2 H(+) = thiamine phosphate + CO2 + diphosphate. It carries out the reaction 2-(2-carboxy-4-methylthiazol-5-yl)ethyl phosphate + 4-amino-2-methyl-5-(diphosphooxymethyl)pyrimidine + 2 H(+) = thiamine phosphate + CO2 + diphosphate. The catalysed reaction is 4-methyl-5-(2-phosphooxyethyl)-thiazole + 4-amino-2-methyl-5-(diphosphooxymethyl)pyrimidine + H(+) = thiamine phosphate + diphosphate. It functions in the pathway cofactor biosynthesis; thiamine diphosphate biosynthesis; thiamine phosphate from 4-amino-2-methyl-5-diphosphomethylpyrimidine and 4-methyl-5-(2-phosphoethyl)-thiazole: step 1/1. Its function is as follows. Condenses 4-methyl-5-(beta-hydroxyethyl)thiazole monophosphate (THZ-P) and 2-methyl-4-amino-5-hydroxymethyl pyrimidine pyrophosphate (HMP-PP) to form thiamine monophosphate (TMP). The polypeptide is Thiamine-phosphate synthase (Enterococcus faecalis (strain ATCC 700802 / V583)).